The following is a 182-amino-acid chain: Large ribosomal subunit protein bL25 (182 aa).

Belongs to the bacterial ribosomal protein bL25 family. CTC subfamily. In terms of assembly, part of the 50S ribosomal subunit; part of the 5S rRNA/L5/L18/L25 subcomplex. Contacts the 5S rRNA. Binds to the 5S rRNA independently of L5 and L18.

Functionally, this is one of the proteins that binds to the 5S RNA in the ribosome where it forms part of the central protuberance. The chain is Large ribosomal subunit protein bL25 from Borrelia garinii subsp. bavariensis (strain ATCC BAA-2496 / DSM 23469 / PBi) (Borreliella bavariensis).